The sequence spans 445 residues: Histone acetyltransferase of the MYST family 1 (445 aa).

The region spanning 60 to 118 (LEVGTRVMCQWRDGKYHPVKVIERRKNYNGGHNDYEYYVHYTEFNRRLDEWIKLEQLDL) is the Tudor-knot domain. The MYST-type HAT domain maps to 169–440 (TKVKNIATIE…VDVSKMIWTP (272 aa)). Residues 202-227 (LFFCEFCLSFMKRKEQLQRHMRKCDL) form a C2HC MYST-type zinc finger. Lysine 269 bears the N6-acetyllysine; by autocatalysis mark. Residues 312–314 (ILT) and 319–325 (QRKGYGK) each bind acetyl-CoA. Residue glutamate 345 is the Proton donor/acceptor of the active site. Acetyl-CoA is bound at residue serine 349.

It belongs to the MYST (SAS/MOZ) family. In terms of assembly, interacts with MRG1 and MRG2. Component of the NuA4 histone acetyltransferase complex. Autoacetylation at Lys-269 is required for proper function. As to expression, expressed in cotyledons, leaves, stems, roots and, at higher levels in developing flowers, particularly in the anthers and gynoecia. Constitutively expressed in all tissues, predominantly in shoot apical meristem.

It is found in the nucleus. The enzyme catalyses L-lysyl-[protein] + acetyl-CoA = N(6)-acetyl-L-lysyl-[protein] + CoA + H(+). Functionally, histone acetyltransferase which may be involved in transcriptional activation. Acetylates 'Lys-5' of histone H4 (H4K5ac). Essential for gametophyte development. Involved in DNA repair after UV-B exposure. Negative regulator of flowering controlling the H4K5ac levels in the FLC chromatin. The polypeptide is Histone acetyltransferase of the MYST family 1 (Arabidopsis thaliana (Mouse-ear cress)).